The following is a 206-amino-acid chain: Ribosomal RNA large subunit methyltransferase E (206 aa).

S-adenosyl-L-methionine-binding residues include G60, W62, D80, D96, and D121. K161 (proton acceptor) is an active-site residue.

The protein belongs to the class I-like SAM-binding methyltransferase superfamily. RNA methyltransferase RlmE family.

It is found in the cytoplasm. It catalyses the reaction uridine(2552) in 23S rRNA + S-adenosyl-L-methionine = 2'-O-methyluridine(2552) in 23S rRNA + S-adenosyl-L-homocysteine + H(+). Specifically methylates the uridine in position 2552 of 23S rRNA at the 2'-O position of the ribose in the fully assembled 50S ribosomal subunit. This Nitrosomonas europaea (strain ATCC 19718 / CIP 103999 / KCTC 2705 / NBRC 14298) protein is Ribosomal RNA large subunit methyltransferase E.